The primary structure comprises 293 residues: MSLEEDIVSDDEMNMIDEDDATDSEAESLSDSDTENEITEKLAEPTKTAIYNRDGLLDKLQDISWPEDVDWTHKLTVEIDQGGAVDVNDDLARETAFYTQALEGTREAFGKLNEMGVNFLRPANYYAEMVKSDVHMEKVKSRLLHEKKQIEESEERRKARDNKRMAKEVQSQKMKERAKEKKDNIESVKKWRKQRQQSGFSDKAGEPELDFESGKSFQRGGGKKRPGVSPGDRSGGKGRPTSRMGNKKREFRDSKFGHGGRKGLSKQNTAETTNDFKGGFRGGKASGNKRQKR.

Residues 1 to 37 (MSLEEDIVSDDEMNMIDEDDATDSEAESLSDSDTENE) show a composition bias toward acidic residues. 2 disordered regions span residues 1 to 45 (MSLE…LAEP) and 150 to 293 (IEES…RQKR). Residues 135–190 (HMEKVKSRLLHEKKQIEESEERRKARDNKRMAKEVQSQKMKERAKEKKDNIESVKK) are a coiled coil. Composition is skewed to basic and acidic residues over residues 150–167 (IEES…RMAK), 173–189 (KMKE…ESVK), and 247–256 (KKREFRDSKF). The segment covering 265 to 275 (SKQNTAETTND) has biased composition (polar residues).

The protein belongs to the EBP2 family. In terms of assembly, interacts with NSN1.

The protein localises to the nucleus. Its subcellular location is the nucleolus. In terms of biological role, required for the processing of the 27S pre-rRNA. Plays an important role in plant growth and senescence by modulating ribosome biogenesis in nucleolus. Associates with ribosomes. The sequence is that of Probable rRNA-processing protein EBP2 homolog from Arabidopsis thaliana (Mouse-ear cress).